We begin with the raw amino-acid sequence, 299 residues long: ATP phosphoribosyltransferase (299 aa).

The protein belongs to the ATP phosphoribosyltransferase family. Long subfamily. In terms of assembly, equilibrium between an active dimeric form, an inactive hexameric form and higher aggregates. Interconversion between the various forms is largely reversible and is influenced by the natural substrates and inhibitors of the enzyme. The cofactor is Mg(2+).

The protein resides in the cytoplasm. The enzyme catalyses 1-(5-phospho-beta-D-ribosyl)-ATP + diphosphate = 5-phospho-alpha-D-ribose 1-diphosphate + ATP. It functions in the pathway amino-acid biosynthesis; L-histidine biosynthesis; L-histidine from 5-phospho-alpha-D-ribose 1-diphosphate: step 1/9. Feedback inhibited by histidine. Functionally, catalyzes the condensation of ATP and 5-phosphoribose 1-diphosphate to form N'-(5'-phosphoribosyl)-ATP (PR-ATP). Has a crucial role in the pathway because the rate of histidine biosynthesis seems to be controlled primarily by regulation of HisG enzymatic activity. The protein is ATP phosphoribosyltransferase of Shigella flexneri serotype 5b (strain 8401).